Consider the following 872-residue polypeptide: Alanine--tRNA ligase (872 aa).

Residues H563, H567, C665, and H669 each coordinate Zn(2+).

Belongs to the class-II aminoacyl-tRNA synthetase family. It depends on Zn(2+) as a cofactor.

The protein localises to the cytoplasm. It catalyses the reaction tRNA(Ala) + L-alanine + ATP = L-alanyl-tRNA(Ala) + AMP + diphosphate. Its function is as follows. Catalyzes the attachment of alanine to tRNA(Ala) in a two-step reaction: alanine is first activated by ATP to form Ala-AMP and then transferred to the acceptor end of tRNA(Ala). Also edits incorrectly charged Ser-tRNA(Ala) and Gly-tRNA(Ala) via its editing domain. The polypeptide is Alanine--tRNA ligase (Bacteroides fragilis (strain YCH46)).